We begin with the raw amino-acid sequence, 854 residues long: Armadillo repeat-containing protein 2 (854 aa).

Disordered regions lie at residues 1 to 116 (MLSS…SFPK), 140 to 194 (QGML…PLLT), and 206 to 255 (EVSL…ETDT). A compositionally biased stretch (low complexity) spans 58–73 (PASSRSPENRPPSSFS). Composition is skewed to polar residues over residues 74–87 (LHAS…SKPI) and 162–187 (KPVS…TGQL). ARM repeat units follow at residues 255 to 294 (TEVD…RTLE), 298 to 337 (MLGK…ALKV), 356 to 396 (EKND…ALKF), 401 to 442 (PGFL…HLLV), 455 to 496 (PLTR…KLTS), 499 to 540 (DCCA…NLTA), 544 to 583 (QARE…EAKP), 585 to 605 (AEAE…AIHP), 606 to 649 (RIGP…NLSF), 651 to 692 (QVKS…NLSQ), 694 to 733 (HDVC…NLTV), and 735 to 777 (KEKR…NFSE).

Functionally, required for sperm flagellum axoneme organization and function. Involved in axonemal central pair complex assembly and/or stability. This is Armadillo repeat-containing protein 2 from Mus musculus (Mouse).